A 246-amino-acid chain; its full sequence is Aliphatic sulfonates import ATP-binding protein SsuB 2 (246 aa).

An ABC transporter domain is found at 4–218; sequence VTVRGLRRAF…RRDPRFEQAR (215 aa). 36-43 contacts ATP; the sequence is GRSGGGKT.

It belongs to the ABC transporter superfamily. Aliphatic sulfonates importer (TC 3.A.1.17.2) family. The complex is composed of two ATP-binding proteins (SsuB), two transmembrane proteins (SsuC) and a solute-binding protein (SsuA).

The protein localises to the cell membrane. The enzyme catalyses ATP + H2O + aliphatic sulfonate-[sulfonate-binding protein]Side 1 = ADP + phosphate + aliphatic sulfonateSide 2 + [sulfonate-binding protein]Side 1.. Part of the ABC transporter complex SsuABC involved in aliphatic sulfonates import. Responsible for energy coupling to the transport system. The protein is Aliphatic sulfonates import ATP-binding protein SsuB 2 of Frankia alni (strain DSM 45986 / CECT 9034 / ACN14a).